The sequence spans 986 residues: LRR receptor-like serine/threonine-protein kinase ER2 (986 aa).

An N-terminal signal peptide occupies residues 1–21; that stretch reads MTTTTTTRLLLAAILLAVAAA. Residues 22–581 are Extracellular-facing; sequence DDDGQTLLEI…VQRSSVSRSA (560 aa). Asn64 and Asn73 each carry an N-linked (GlcNAc...) asparagine glycan. 20 LRR repeats span residues 68–89, 90–114, 116–138, 139–161, 162–186, 188–210, 211–233, 234–259, 261–280, 281–304, 306–329, 330–352, 354–377, 379–401, 402–425, 427–449, 450–472, 473–498, 500–520, and 521–545; these read AVAALNLSGLNLGGEISPAIGN, LKSVESIDLKSNELSGQIPDEIGDC, SLKTLDLSSNNLGGDIPFSISKL, KHLENLILKNNQLVGMIPSTLSQ, LPNLKILDLAQNKLNGEIPRLIYWN, VLQYLGLRSNNLEGSLSPEMCQL, TGLWYFDVKNNSLTGIIPDTIGN, CTSFQVLDLSYNRLTGEIPFNIGFLQ, ATLSLQGNNFSGPIPSVIGL, MQALAVLDLSFNQLSGPIPSILGN, TYTEKLYLQGNRLTGSIPPELGNM, STLHYLELNDNQLTGFIPPELGK, TGLFDLNLANNNLEGPIPDNISSC, NLISFNAYGNKLNGTVPRSLHKL, ESITYLNLSSNYLSGAIPIELAKM, NLDTLDLSCNMVAGPIPSAIGSL, EHLLRLNFSNNNLVGYIPAEFGN, LRSIMEIDLSSNHLGGLIPQEVGMLQ, LILLKLESNNITGDVSSLINC, and FSLNVLNVSYNNLAGIVPTDNNFSR. 2 N-linked (GlcNAc...) asparagine glycosylation sites follow: Asn220 and Asn233. N-linked (GlcNAc...) asparagine glycans are attached at residues Asn269, Asn304, and Asn328. 3 N-linked (GlcNAc...) asparagine glycosylation sites follow: Asn373, Asn391, and Asn408. Residue Asn456 is glycosylated (N-linked (GlcNAc...) asparagine). Asn509, Asn527, and Asn542 each carry an N-linked (GlcNAc...) asparagine glycan. A helical transmembrane segment spans residues 582 to 602; that stretch reads ILGIAVAGLVILLMILAAACW. At 603 to 986 the chain is on the cytoplasmic side; the sequence is PHWAQVPKDV…FGEVISQNTE (384 aa). The region spanning 653–934 is the Protein kinase domain; it reads LSEKYIIGYG…YPDPPSKPAL (282 aa). Residues 659–667 and Lys681 contribute to the ATP site; that span reads IGYGASSTV. Asp779 (proton acceptor) is an active-site residue.

Belongs to the protein kinase superfamily. Ser/Thr protein kinase family.

It is found in the cell membrane. It carries out the reaction L-seryl-[protein] + ATP = O-phospho-L-seryl-[protein] + ADP + H(+). The catalysed reaction is L-threonyl-[protein] + ATP = O-phospho-L-threonyl-[protein] + ADP + H(+). Receptor kinase that may be involved in the regulation of cell proliferation and cell growth. This chain is LRR receptor-like serine/threonine-protein kinase ER2, found in Oryza sativa subsp. japonica (Rice).